The sequence spans 378 residues: Alanine racemase (378 aa).

Lysine 40 (proton acceptor; specific for D-alanine) is an active-site residue. N6-(pyridoxal phosphate)lysine is present on lysine 40. Residue arginine 140 coordinates substrate. Tyrosine 270 functions as the Proton acceptor; specific for L-alanine in the catalytic mechanism. Methionine 317 is a binding site for substrate.

The protein belongs to the alanine racemase family. Requires pyridoxal 5'-phosphate as cofactor.

It carries out the reaction L-alanine = D-alanine. The protein operates within amino-acid biosynthesis; D-alanine biosynthesis; D-alanine from L-alanine: step 1/1. In terms of biological role, catalyzes the interconversion of L-alanine and D-alanine. May also act on other amino acids. The polypeptide is Alanine racemase (alr) (Lacticaseibacillus casei (strain BL23) (Lactobacillus casei)).